Consider the following 477-residue polypeptide: Calcium uptake protein 1, mitochondrial (477 aa).

The N-terminal 33 residues, 1–33, are a transit peptide targeting the mitochondrion; the sequence is MFRLNTLSALAELAVGSRWYHGASQPTQTKRRL. The interval 57–107 is disordered; that stretch reads AESPPCVNSKKPDTEDKERNKDSGEVSSREGRAADAAAEPYPEDKKKKRSG. Residues 66 to 89 show a composition bias toward basic and acidic residues; the sequence is KKPDTEDKERNKDSGEVSSREGRA. The interval 101 to 112 is polybasic region; sequence KKKKRSGFRDRK. Serine 124 is modified (phosphoserine; by PKB). The segment at 128-131 is k/R-ring; that stretch reads KIFR. Residues 220–255 form the EF-hand 1 domain; the sequence is TPQRNFEIAFKMFDLNGDGEVDMEEFEQVQSIIRSQ. 5 residues coordinate Ca(2+): aspartate 233, asparagine 235, aspartate 237, glutamate 239, and glutamate 244. Residues 261-265 are k/R-ring; it reads RHRDR. Residues 356-376 form the EF-hand 2; degenerate domain; that stretch reads KDGKGLTFQEVENFFTFLKNI. In terms of domain architecture, EF-hand 3 spans 410–445; that stretch reads LSDHVCDVVFALFDCDGNGELSNKEFVSIMKQRLMR. Ca(2+)-binding residues include aspartate 423, aspartate 425, asparagine 427, glutamate 429, and glutamate 434. Arginine 457 bears the Asymmetric dimethylarginine mark. Residues 457-467 are C-helix region; it reads RLMQAMWKCAQ.

It belongs to the MICU1 family. MICU1 subfamily. In terms of assembly, heterodimer; disulfide-linked; heterodimerizes with MICU2 or MICU3. Homodimer; disulfide-linked. Component of the uniplex complex, composed of MCU, EMRE/SMDT1, MICU1 and MICU2 (or MICU3) in a 4:4:1:1 stoichiometry. The composition of calcium sensors within the uniplex complex can differ depending on tissues: a MICU1 homodimer can be present instead of the MICU1-MICU2 heterodimer in skeletal-muscle and kidney. MICU1 is recruited to the uniplex complex by EMRE/SMDT1, and it associates with MCU at low calcium levels, occluding the pore of the MCU channel. Associates with the MICOS complex. Interacts with SLC25A23. Interacts with CHCHD4/MIA40; which introduces the interchain disulfide bond with MICU2. Interacts (when methylated) with UCP2; leading to decrease the calcium sensitivity of MICU1. As to quaternary structure, heterodimer; disulfide-linked; heterodimerizes with MICU2 or MICU3. Heterodimerizes with MICU3 in skeletal muscle. Component of the uniplex complex, composed of MCU, EMRE/SMDT1, MICU1 and MICU2 (or MICU3) in a 4:4:1:1 stoichiometry. Also localizes to mitochondrial cristae junctions. In terms of processing, phosphorylation at Ser-124 by AKT1 impairs its maturation and stability. Post-translationally, asymmetric dimethylation at Arg-457 by PRMT1 decreases the calcium sensitivity of MICU1 by promoting interaction with UCP2. Degraded by YME1L1 when not complexed as homodimer or heterodimer. Not degraded when complexed as homodimer or heterodimer; the presence of the interchain disulfide bond protecting MICU1 from degradation by YME1L1. Expressed in skeletal muscle, heart, kidney, liver, brain, lung, fat and spleen. In terms of tissue distribution, specifically expressed in the skeletal muscle.

It is found in the mitochondrion intermembrane space. The protein resides in the mitochondrion inner membrane. Calcium sensor of the mitochondrial calcium uniporter (MCU) channel, which senses calcium level via its EF-hand domains. MICU1 and MICU2 (or MICU3) form a disulfide-linked heterodimer that stimulates and inhibits MCU activity, depending on the concentration of calcium. At low calcium levels, MICU1 occludes the pore of the MCU channel, preventing mitochondrial calcium uptake. At higher calcium levels, calcium-binding to MICU1 and MICU2 (or MICU3) induces a conformational change that weakens MCU-MICU1 interactions and moves the MICU1-MICU2 heterodimer away from the pore, allowing calcium permeation through the MCU channel. Also required to protect against manganese toxicity by preventing manganese uptake by MCU: mechanistically, manganese-binding to its EF-hand domains does not induce any conformational change, maintaining MCU pore occlusion. Acts as a regulator of mitochondrial cristae structure independently of its ability to regulate the mitochondrial calcium uniporter channel. Regulates glucose-dependent insulin secretion in pancreatic beta-cells by regulating mitochondrial calcium uptake. Induces T-helper 1-mediated autoreactivity, which is accompanied by the release of IFNG. In terms of biological role, isoform that regulates mitochondrial calcium uniporter (MCU) in the skeletal muscle. Compared to other isoforms, this isoform has higher affinity for calcium, promoting mitochondrial calcium uptake at lower calcium concentrations. This allows a rapid response of mitochondrial metabolism and ensures sustained ATP production needed for resistance and strenuous exercise. The polypeptide is Calcium uptake protein 1, mitochondrial (Mus musculus (Mouse)).